Consider the following 294-residue polypeptide: ATP synthase gamma chain (294 aa).

Belongs to the ATPase gamma chain family. F-type ATPases have 2 components, CF(1) - the catalytic core - and CF(0) - the membrane proton channel. CF(1) has five subunits: alpha(3), beta(3), gamma(1), delta(1), epsilon(1). CF(0) has three main subunits: a, b and c.

It is found in the cell inner membrane. Functionally, produces ATP from ADP in the presence of a proton gradient across the membrane. The gamma chain is believed to be important in regulating ATPase activity and the flow of protons through the CF(0) complex. The polypeptide is ATP synthase gamma chain (Parvibaculum lavamentivorans (strain DS-1 / DSM 13023 / NCIMB 13966)).